The primary structure comprises 358 residues: Methylthioribose-1-phosphate isomerase (358 aa).

Residues 54–56, Arg-96, and Gln-205 each bind substrate; that span reads RGA. Asp-246 acts as the Proton donor in catalysis. Residue 256-257 participates in substrate binding; sequence GK.

Belongs to the eIF-2B alpha/beta/delta subunits family. MtnA subfamily.

It carries out the reaction 5-(methylsulfanyl)-alpha-D-ribose 1-phosphate = 5-(methylsulfanyl)-D-ribulose 1-phosphate. Its pathway is amino-acid biosynthesis; L-methionine biosynthesis via salvage pathway; L-methionine from S-methyl-5-thio-alpha-D-ribose 1-phosphate: step 1/6. Functionally, catalyzes the interconversion of methylthioribose-1-phosphate (MTR-1-P) into methylthioribulose-1-phosphate (MTRu-1-P). The polypeptide is Methylthioribose-1-phosphate isomerase (Pseudomonas putida (strain ATCC 47054 / DSM 6125 / CFBP 8728 / NCIMB 11950 / KT2440)).